Here is a 1026-residue protein sequence, read N- to C-terminus: Cadherin-like and PC-esterase domain-containing protein 1 (1026 aa).

Residues 1 to 34 form the signal peptide; sequence MVCRPVFPCRRRFCPRPFLVGLVVAICLFYQTLT. Asn251, Asn404, Asn413, Asn737, Asn791, and Asn985 each carry an N-linked (GlcNAc...) asparagine glycan.

The protein belongs to the PC-esterase family.

The sequence is that of Cadherin-like and PC-esterase domain-containing protein 1 (CPED1) from Homo sapiens (Human).